Reading from the N-terminus, the 352-residue chain is 4-hydroxybenzaldehyde synthase, chloroplastic (352 aa).

N-linked (GlcNAc...) asparagine glycosylation is present at Asn-122. Intrachain disulfides connect Cys-159-Cys-199 and Cys-190-Cys-231. Residue Asn-247 is glycosylated (N-linked (GlcNAc...) asparagine). Cysteines 289 and 339 form a disulfide. Catalysis depends on residues His-298 and Asn-318.

It belongs to the peptidase C1 family. Forms homodimers, homotrimers and homotetramers. Mainly expressed in pods, but also present in stems, roots, leaves and embryos (at protein level).

Its subcellular location is the plastid. The protein resides in the chloroplast. It carries out the reaction (E)-4-coumarate + H2O = 4-hydroxybenzaldehyde + acetate. Its pathway is aromatic compound metabolism; phenylpropanoid biosynthesis. With respect to regulation, inhibited by ascorbate. In terms of biological role, involved in the biosynthesis of vanillin (4-hydroxy-3-methoxy-benzaldehyde) and derivative natural products, key components of vanilla pods flavor. Catalyzes the conversion of (E)-4-coumarate to 4-hydroxybenzaldehyde, a vanillin precursor. Mediates the conversion of ferulic acid to 3-methoxy-4-hydroxybenzaldehyde with a very low efficiency. Cannot use cinnamic, caffeic, sinapic and o-coumaric acids as substrates. The protein is 4-hydroxybenzaldehyde synthase, chloroplastic of Vanilla planifolia (Vanilla).